A 311-amino-acid chain; its full sequence is Aspartate carbamoyltransferase catalytic subunit (311 aa).

Residues R58 and T59 each contribute to the carbamoyl phosphate site. Position 86 (K86) interacts with L-aspartate. Carbamoyl phosphate contacts are provided by R108, H136, and Q139. The L-aspartate site is built by R169 and R224. Carbamoyl phosphate-binding residues include G265 and P266.

It belongs to the aspartate/ornithine carbamoyltransferase superfamily. ATCase family. Heterododecamer (2C3:3R2) of six catalytic PyrB chains organized as two trimers (C3), and six regulatory PyrI chains organized as three dimers (R2).

It catalyses the reaction carbamoyl phosphate + L-aspartate = N-carbamoyl-L-aspartate + phosphate + H(+). It participates in pyrimidine metabolism; UMP biosynthesis via de novo pathway; (S)-dihydroorotate from bicarbonate: step 2/3. Catalyzes the condensation of carbamoyl phosphate and aspartate to form carbamoyl aspartate and inorganic phosphate, the committed step in the de novo pyrimidine nucleotide biosynthesis pathway. The chain is Aspartate carbamoyltransferase catalytic subunit from Geobacter sulfurreducens (strain ATCC 51573 / DSM 12127 / PCA).